A 161-amino-acid chain; its full sequence is Phosphotransferase enzyme IIB component GlvB (161 aa).

The helical transmembrane segment at 10-32 (LTQIAIGLCFTLLYFVVFRTLIL) threads the bilayer. The PTS EIIB type-1 domain maps to 70 to 152 (LDQAAGILQA…DSLINSHQSA (83 aa)). Residue Cys-92 is the Phosphocysteine intermediate of the active site.

Its subcellular location is the cell inner membrane. The phosphoenolpyruvate-dependent sugar phosphotransferase system (sugar PTS), a major carbohydrate active -transport system, catalyzes the phosphorylation of incoming sugar substrates concomitantly with their translocation across the cell membrane. This operon may be cryptic in wild-type K12 strains. The chain is Phosphotransferase enzyme IIB component GlvB from Escherichia coli (strain K12).